Here is a 528-residue protein sequence, read N- to C-terminus: MRLFTTIAGLNCYLNLLRNEQKKSPDTIGLVPTMGALHKGHLSLIKRAREENTITVVSIFINPLQFAPREDFKEYPRQLEIDKEFCEKEGVDVIFAPTPETMGMKNALSTDAQDSTTTVVSPSHMTSIMCGVSRPNFFQGVATIVTKLLNIVKPNNAYFGQKDAQQLAIIKQLVKDLSLPVNIVYCPIIREASGLAISSRNQYLTPEQKEQASMLYASLCYGRKIFLENQDTPNILETVENAVKEKLASQPVLKLEYLEIVDPETLKPLENIQNIGLLAIAAYIGSCRLIDNILLRNRKPIIAIDGPAGAGKSTVTKLVGQSLGLLYLDTGAMYRAVTWMVLQSGVPVTDQAQVAELVSQCQISFNSPENNHVVINGQDVTVAIRSREVTNNVSIVAAQPTVRYFMVKQQQQFGAKGGIVAEGRDIGSHVFPNAELKIFLTASLKERSRRRLVELKQKGQTNISLEEVEKEIICRDQKDTNRKISPLRKSSDAVEISTDGLSIGEVTQKIVDIFKTTCYGKSSVNNII.

Positions 1 to 293 (MRLFTTIAGL…IGSCRLIDNI (293 aa)) are pantoate--beta-alanine ligase. An ATP-binding site is contributed by 34–41 (MGALHKGH). Residue histidine 41 is the Proton donor of the active site. A (R)-pantoate-binding site is contributed by glutamine 65. Beta-alanine is bound at residue glutamine 65. 160–163 (GQKD) serves as a coordination point for ATP. Glutamine 166 is a binding site for (R)-pantoate. ATP contacts are provided by residues isoleucine 189 and 197–200 (ISSR). The cytidylate kinase stretch occupies residues 294–528 (LLRNRKPIIA…YGKSSVNNII (235 aa)).

The protein in the N-terminal section; belongs to the pantothenate synthetase family. This sequence in the C-terminal section; belongs to the cytidylate kinase family. Type 1 subfamily.

Its subcellular location is the cytoplasm. It catalyses the reaction (R)-pantoate + beta-alanine + ATP = (R)-pantothenate + AMP + diphosphate + H(+). The catalysed reaction is CMP + ATP = CDP + ADP. It carries out the reaction dCMP + ATP = dCDP + ADP. The protein operates within cofactor biosynthesis; (R)-pantothenate biosynthesis; (R)-pantothenate from (R)-pantoate and beta-alanine: step 1/1. Catalyzes the condensation of pantoate with beta-alanine in an ATP-dependent reaction via a pantoyl-adenylate intermediate. In terms of biological role, catalyzes the transfer of a phosphate group from ATP to either CMP or dCMP to form CDP or dCDP and ADP, respectively. The chain is Bifunctional pantoate ligase/cytidylate kinase from Trichodesmium erythraeum (strain IMS101).